Here is a 90-residue protein sequence, read N- to C-terminus: Large ribosomal subunit protein bL31B (90 aa).

This sequence belongs to the bacterial ribosomal protein bL31 family. Type B subfamily. As to quaternary structure, part of the 50S ribosomal subunit.

This Pseudomonas fluorescens (strain SBW25) protein is Large ribosomal subunit protein bL31B.